Reading from the N-terminus, the 432-residue chain is Adenylosuccinate synthetase (432 aa).

GTP-binding positions include glycine 13 to lysine 19 and glycine 41 to threonine 43. Aspartate 14 acts as the Proton acceptor in catalysis. Positions 14 and 41 each coordinate Mg(2+). IMP is bound by residues aspartate 14 to lysine 17, asparagine 39 to histidine 42, threonine 130, arginine 144, glutamine 225, threonine 240, and arginine 304. Catalysis depends on histidine 42, which acts as the Proton donor. Alanine 300 to arginine 306 serves as a coordination point for substrate. GTP is bound by residues arginine 306, lysine 332 to aspartate 334, and serine 415 to glycine 417.

This sequence belongs to the adenylosuccinate synthetase family. As to quaternary structure, homodimer. Requires Mg(2+) as cofactor.

Its subcellular location is the cytoplasm. The catalysed reaction is IMP + L-aspartate + GTP = N(6)-(1,2-dicarboxyethyl)-AMP + GDP + phosphate + 2 H(+). It functions in the pathway purine metabolism; AMP biosynthesis via de novo pathway; AMP from IMP: step 1/2. Plays an important role in the de novo pathway of purine nucleotide biosynthesis. Catalyzes the first committed step in the biosynthesis of AMP from IMP. The chain is Adenylosuccinate synthetase from Pectobacterium carotovorum subsp. carotovorum (strain PC1).